A 130-amino-acid chain; its full sequence is Small ribosomal subunit protein uS11 (130 aa).

The protein belongs to the universal ribosomal protein uS11 family. As to quaternary structure, part of the 30S ribosomal subunit. Interacts with proteins S7 and S18. Binds to IF-3.

Its function is as follows. Located on the platform of the 30S subunit, it bridges several disparate RNA helices of the 16S rRNA. Forms part of the Shine-Dalgarno cleft in the 70S ribosome. This Ruegeria pomeroyi (strain ATCC 700808 / DSM 15171 / DSS-3) (Silicibacter pomeroyi) protein is Small ribosomal subunit protein uS11.